A 176-amino-acid chain; its full sequence is Cytochrome b (176 aa).

Helical transmembrane passes span 33–53 (FGSL…FLAM), 77–98 (WMLR…YLHV), and 113–133 (WNVG…GYVL). Positions 83 and 97 each coordinate heme b.

The protein belongs to the cytochrome b family. As to quaternary structure, the cytochrome bc1 complex contains 11 subunits: 3 respiratory subunits (MT-CYB, CYC1 and UQCRFS1), 2 core proteins (UQCRC1 and UQCRC2) and 6 low-molecular weight proteins (UQCRH/QCR6, UQCRB/QCR7, UQCRQ/QCR8, UQCR10/QCR9, UQCR11/QCR10 and a cleavage product of UQCRFS1). This cytochrome bc1 complex then forms a dimer. The cofactor is heme b.

Its subcellular location is the mitochondrion inner membrane. Functionally, component of the ubiquinol-cytochrome c reductase complex (complex III or cytochrome b-c1 complex) that is part of the mitochondrial respiratory chain. The b-c1 complex mediates electron transfer from ubiquinol to cytochrome c. Contributes to the generation of a proton gradient across the mitochondrial membrane that is then used for ATP synthesis. In Idionycteris phyllotis (Allen's big-eared bat), this protein is Cytochrome b (MT-CYB).